The chain runs to 447 residues: Tubulin beta chain (447 aa).

GTP is bound by residues glutamine 11, glutamate 69, serine 138, glycine 142, threonine 143, glycine 144, asparagine 204, and asparagine 226. Glutamate 69 lines the Mg(2+) pocket. Residues 427–447 (DAGIDEEEEEYEEELPLEGEE) form a disordered region. Residues 429–447 (GIDEEEEEYEEELPLEGEE) show a composition bias toward acidic residues.

The protein belongs to the tubulin family. In terms of assembly, dimer of alpha and beta chains. A typical microtubule is a hollow water-filled tube with an outer diameter of 25 nm and an inner diameter of 15 nM. Alpha-beta heterodimers associate head-to-tail to form protofilaments running lengthwise along the microtubule wall with the beta-tubulin subunit facing the microtubule plus end conferring a structural polarity. Microtubules usually have 13 protofilaments but different protofilament numbers can be found in some organisms and specialized cells. Mg(2+) serves as cofactor.

The protein resides in the cytoplasm. The protein localises to the cytoskeleton. Functionally, tubulin is the major constituent of microtubules, a cylinder consisting of laterally associated linear protofilaments composed of alpha- and beta-tubulin heterodimers. Microtubules grow by the addition of GTP-tubulin dimers to the microtubule end, where a stabilizing cap forms. Below the cap, tubulin dimers are in GDP-bound state, owing to GTPase activity of alpha-tubulin. In Hapsidospora chrysogena (Acremonium chrysogenum), this protein is Tubulin beta chain (TUB2).